Here is a 332-residue protein sequence, read N- to C-terminus: Phosphoribulokinase (332 aa).

Belongs to the phosphoribulokinase family.

It catalyses the reaction D-ribulose 5-phosphate + ATP = D-ribulose 1,5-bisphosphate + ADP + H(+). Its pathway is carbohydrate biosynthesis; Calvin cycle. The protein is Phosphoribulokinase (prk) of Synechocystis sp. (strain ATCC 27184 / PCC 6803 / Kazusa).